Consider the following 228-residue polypeptide: Urease accessory protein UreF (228 aa).

It belongs to the UreF family. As to quaternary structure, ureD, UreF and UreG form a complex that acts as a GTP-hydrolysis-dependent molecular chaperone, activating the urease apoprotein by helping to assemble the nickel containing metallocenter of UreC. The UreE protein probably delivers the nickel.

The protein localises to the cytoplasm. Its function is as follows. Required for maturation of urease via the functional incorporation of the urease nickel metallocenter. The polypeptide is Urease accessory protein UreF (Yersinia enterocolitica serotype O:8 / biotype 1B (strain NCTC 13174 / 8081)).